The sequence spans 213 residues: MSRNPFMQNMPEIQAAGGLVPMVIEQSARGERAYDIYSRLLKERVIFLVGQVEDYMANLICAQLLFLEAENPDKDIHLYINSPGGSVTAGMAIYDTMQFIKADVSTTCIGQACSMGAFLLAGGAKGKRFCLPNSRVMIHQPLGGFQGQASDIEIHAKEILFIRERLNELLAHHTGQSLETIERDTNRDNFMSAPRAVEYGIVDAVHEKRQMPV.

The active-site Nucleophile is the Ser114. Residue His139 is part of the active site.

The protein belongs to the peptidase S14 family. Fourteen ClpP subunits assemble into 2 heptameric rings which stack back to back to give a disk-like structure with a central cavity, resembling the structure of eukaryotic proteasomes.

It is found in the cytoplasm. It catalyses the reaction Hydrolysis of proteins to small peptides in the presence of ATP and magnesium. alpha-casein is the usual test substrate. In the absence of ATP, only oligopeptides shorter than five residues are hydrolyzed (such as succinyl-Leu-Tyr-|-NHMec, and Leu-Tyr-Leu-|-Tyr-Trp, in which cleavage of the -Tyr-|-Leu- and -Tyr-|-Trp bonds also occurs).. Its function is as follows. Cleaves peptides in various proteins in a process that requires ATP hydrolysis. Has a chymotrypsin-like activity. Plays a major role in the degradation of misfolded proteins. This Ectopseudomonas mendocina (strain ymp) (Pseudomonas mendocina) protein is ATP-dependent Clp protease proteolytic subunit.